Here is a 407-residue protein sequence, read N- to C-terminus: Peptidase T (407 aa).

Position 82 (H82) interacts with Zn(2+). D84 is an active-site residue. D143 is a binding site for Zn(2+). E177 functions as the Proton acceptor in the catalytic mechanism. 3 residues coordinate Zn(2+): E178, D200, and H382.

The protein belongs to the peptidase M20B family. It depends on Zn(2+) as a cofactor.

It localises to the cytoplasm. The catalysed reaction is Release of the N-terminal residue from a tripeptide.. Its function is as follows. Cleaves the N-terminal amino acid of tripeptides. The chain is Peptidase T from Streptococcus pyogenes serotype M18 (strain MGAS8232).